A 312-amino-acid polypeptide reads, in one-letter code: Dihydroorotate dehydrogenase B (NAD(+)), catalytic subunit (312 aa).

FMN-binding positions include serine 23 and 47 to 48 (KA). Substrate-binding positions include lysine 47 and 71 to 75 (NAIGL). The FMN site is built by asparagine 102 and asparagine 130. Asparagine 130 is a binding site for substrate. Residue cysteine 133 is the Nucleophile of the active site. FMN-binding residues include lysine 168 and isoleucine 194. 195 to 196 (NT) serves as a coordination point for substrate. FMN is bound by residues glycine 220, 246–247 (GG), and 268–269 (GT).

It belongs to the dihydroorotate dehydrogenase family. Type 1 subfamily. Heterotetramer of 2 PyrK and 2 PyrD type B subunits. Requires FMN as cofactor.

Its subcellular location is the cytoplasm. The catalysed reaction is (S)-dihydroorotate + NAD(+) = orotate + NADH + H(+). The protein operates within pyrimidine metabolism; UMP biosynthesis via de novo pathway; orotate from (S)-dihydroorotate (NAD(+) route): step 1/1. Its function is as follows. Catalyzes the conversion of dihydroorotate to orotate with NAD(+) as electron acceptor. This Enterococcus faecalis (strain ATCC 700802 / V583) protein is Dihydroorotate dehydrogenase B (NAD(+)), catalytic subunit (pyrDB).